We begin with the raw amino-acid sequence, 142 residues long: Transcription antitermination protein NusB (142 aa).

This sequence belongs to the NusB family.

In terms of biological role, involved in transcription antitermination. Required for transcription of ribosomal RNA (rRNA) genes. Binds specifically to the boxA antiterminator sequence of the ribosomal RNA (rrn) operons. This Roseiflexus castenholzii (strain DSM 13941 / HLO8) protein is Transcription antitermination protein NusB.